Consider the following 85-residue polypeptide: Putative defensin-like protein 142 (85 aa).

The signal sequence occupies residues 1–24 (MKKSFLFTFTVLTIFTILVIGVAP). Cystine bridges form between Cys30–Cys78, Cys41–Cys63, Cys46–Cys73, and Cys50–Cys75.

Belongs to the DEFL family.

The protein localises to the secreted. The chain is Putative defensin-like protein 142 (LCR34) from Arabidopsis thaliana (Mouse-ear cress).